Consider the following 296-residue polypeptide: 4-hydroxybenzoate octaprenyltransferase (296 aa).

The next 8 membrane-spanning stretches (helical) occupy residues 29–49, 55–75, 102–122, 146–166, 169–189, 219–239, 241–261, and 275–295; these read IGIY…ADGV, LLIF…INDF, AWIT…LTNA, YYPQ…AFTA, GELP…TVAY, LIIG…GSRF, LGLY…WEAW, and FLHN…DYAL.

It belongs to the UbiA prenyltransferase family. Requires Mg(2+) as cofactor.

It is found in the cell inner membrane. The enzyme catalyses all-trans-octaprenyl diphosphate + 4-hydroxybenzoate = 4-hydroxy-3-(all-trans-octaprenyl)benzoate + diphosphate. The protein operates within cofactor biosynthesis; ubiquinone biosynthesis. In terms of biological role, catalyzes the prenylation of para-hydroxybenzoate (PHB) with an all-trans polyprenyl group. Mediates the second step in the final reaction sequence of ubiquinone-8 (UQ-8) biosynthesis, which is the condensation of the polyisoprenoid side chain with PHB, generating the first membrane-bound Q intermediate 3-octaprenyl-4-hydroxybenzoate. The chain is 4-hydroxybenzoate octaprenyltransferase from Pseudomonas aeruginosa (strain UCBPP-PA14).